The chain runs to 348 residues: MNGTEGPNFYVPFSNATGVVRSPFEYPQYYLAEPWQFSMLAAYMFLLIVLGFPINFLTLYVTVQHKKLRTPLNYILLNLAVADLFMVFGGFTTTLYTSLHGYFVFGPTGCNAEGFFATLGGEIALWSLVVLAIERYVVVCKPMSNFRFGENHAIMGVAFTWVMALACAAPPLFGWSRYIPEGLQCSCGIDYYTLKPEVNNESFVIYMFVVHFTIPMIVIFFCYGQLVFTVKEARAQQQESATTQKAEKEVTRMVIIMVIAFLICWVPYASVAFYIFTHQGSNFGPIFMTIPAFFAKSASIYNPVIYIMMNKQFRNCMLTTICCGKNPLGDDEASATVSKTETSQVAPA.

Residue Met1 is modified to N-acetylmethionine. The Extracellular portion of the chain corresponds to 1-36 (MNGTEGPNFYVPFSNATGVVRSPFEYPQYYLAEPWQ). Residues Asn2 and Asn15 are each glycosylated (N-linked (GlcNAc...) asparagine). Residues 37–61 (FSMLAAYMFLLIVLGFPINFLTLYV) traverse the membrane as a helical segment. Topologically, residues 62 to 73 (TVQHKKLRTPLN) are cytoplasmic. The helical transmembrane segment at 74-96 (YILLNLAVADLFMVFGGFTTTLY) threads the bilayer. Residues 97-110 (TSLHGYFVFGPTGC) are Extracellular-facing. Residues Cys110 and Cys187 are joined by a disulfide bond. A helical membrane pass occupies residues 111-133 (NAEGFFATLGGEIALWSLVVLAI). The 'Ionic lock' involved in activated form stabilization motif lies at 134–136 (ERY). Over 134-152 (ERYVVVCKPMSNFRFGENH) the chain is Cytoplasmic. The chain crosses the membrane as a helical span at residues 153 to 173 (AIMGVAFTWVMALACAAPPLF). The Extracellular segment spans residues 174 to 202 (GWSRYIPEGLQCSCGIDYYTLKPEVNNES). Glu201 is a Zn(2+) binding site. A helical membrane pass occupies residues 203–224 (FVIYMFVVHFTIPMIVIFFCYG). At 225–252 (QLVFTVKEARAQQQESATTQKAEKEVTR) the chain is on the cytoplasmic side. Residues 253 to 274 (MVIIMVIAFLICWVPYASVAFY) form a helical membrane-spanning segment. Topologically, residues 275–286 (IFTHQGSNFGPI) are extracellular. Gln279 provides a ligand contact to Zn(2+). Residues 287–308 (FMTIPAFFAKSASIYNPVIYIM) form a helical membrane-spanning segment. Residue Lys296 is modified to N6-(retinylidene)lysine. The Cytoplasmic portion of the chain corresponds to 309–348 (MNKQFRNCMLTTICCGKNPLGDDEASATVSKTETSQVAPA). 2 S-palmitoyl cysteine lipidation sites follow: Cys322 and Cys323. Residues 330-348 (DDEASATVSKTETSQVAPA) form an interaction with SAG region. Ser334 is modified (phosphoserine). Thr336 bears the Phosphothreonine mark. Residue Ser338 is modified to Phosphoserine. Thr340 and Thr342 each carry phosphothreonine. Ser343 is modified (phosphoserine).

Belongs to the G-protein coupled receptor 1 family. Opsin subfamily. In terms of assembly, homodimer. May form a complex composed of RHO, GRK1 and RCVRN in a Ca(2+)-dependent manner; RCVRN prevents the interaction between GRK1 and RHO. Interacts with GRK1. Interacts (phosphorylated form) with SAG. Interacts with GNAT1. Interacts with GNAT3. SAG and G-proteins compete for a common binding site. Interacts with PRCD; the interaction promotes PRCD stability. Forms a complex with ASAP1 and ARF4. Forms a complex with ASAP1, RAB11A, Rabin8/RAB3IP, ARF4 and RAB11FIP3; the complex regulates Golgi-to-cilia rhodopsin/RHO transport in photoreceptors. In terms of processing, phosphorylated on some or all of the serine and threonine residues present in the C-terminal region. Post-translationally, contains one covalently linked retinal chromophore. Upon light absorption, the covalently bound 11-cis-retinal is converted to all-trans-retinal. After hydrolysis of the Schiff base and release of the covalently bound all-trans-retinal, active rhodopsin is regenerated by binding of a fresh molecule of 11-cis-retinal.

It is found in the membrane. The protein resides in the cell projection. The protein localises to the cilium. Its subcellular location is the photoreceptor outer segment. In terms of biological role, photoreceptor required for image-forming vision at low light intensity. Required for photoreceptor cell viability after birth. Light-induced isomerization of 11-cis to all-trans retinal triggers a conformational change that activates signaling via G-proteins. Subsequent receptor phosphorylation mediates displacement of the bound G-protein alpha subunit by the arrestin SAG and terminates signaling. This chain is Rhodopsin (RHO), found in Macaca fascicularis (Crab-eating macaque).